Consider the following 107-residue polypeptide: Circadian clock oscillator protein KaiB (107 aa).

Belongs to the KaiB family. In terms of assembly, may undergo a major conformational rearrangment; in the free state forms homooligomers. When bound to KaiC switches to a monomeric thioredoxin-fold (KaiB(fs)). The active oscillator complex is probably KaiC(6):KaiB(6).

Functionally, component of the KaiBC clock protein complex, which constitutes the main circadian regulator in cyanobacteria; it may modify the ATPase activity of KaiC. Its function is as follows. May be a metamorphic protein which reversibly switches between an inactive tetrameric fold and a rare, thioredoxin-like monomeric fold (KaiB(fs)). KaiB(fs) binds phospho-KaiC, and perhaps clock output effectors. The protein is Circadian clock oscillator protein KaiB of Prochlorococcus marinus (strain NATL2A).